A 905-amino-acid polypeptide reads, in one-letter code: Protein translocase subunit SecA (905 aa).

Residues Gln-87, 105–109, and Asp-512 each bind ATP; that span reads GEGKT. The tract at residues 840–905 is disordered; it reads AQRQQEAMAQ…HCHGSKARYA (66 aa). The segment covering 843 to 852 has biased composition (low complexity); sequence QQEAMAQAES. Residues 853 to 862 show a composition bias toward basic and acidic residues; it reads ENYRTADHQA. Polar residues predominate over residues 863–874; it reads EAQQSESLTEEQ. The Zn(2+) site is built by Cys-886, Cys-888, Cys-897, and His-898. The span at 892-905 shows a compositional bias: basic residues; that stretch reads KKYKHCHGSKARYA.

The protein belongs to the SecA family. As to quaternary structure, monomer and homodimer. Part of the essential Sec protein translocation apparatus which comprises SecA, SecYEG and auxiliary proteins SecDF-YajC and YidC. Zn(2+) serves as cofactor.

It localises to the cell inner membrane. Its subcellular location is the cytoplasm. The catalysed reaction is ATP + H2O + cellular proteinSide 1 = ADP + phosphate + cellular proteinSide 2.. Its function is as follows. Part of the Sec protein translocase complex. Interacts with the SecYEG preprotein conducting channel. Has a central role in coupling the hydrolysis of ATP to the transfer of proteins into and across the cell membrane, serving both as a receptor for the preprotein-SecB complex and as an ATP-driven molecular motor driving the stepwise translocation of polypeptide chains across the membrane. This is Protein translocase subunit SecA from Actinobacillus pleuropneumoniae serotype 3 (strain JL03).